Consider the following 315-residue polypeptide: MEGPPPSKRPCGLPPGVRLVVPAAAASASNAATAAAAAAPAGAGAGASKPARPPAAARPAKGTPAASAATTATGADASAPAPDPGAPTWDAFAAEFDVAPSWRALLEPEIAKPYARLLLAEYRGRCLTEEVLPAREDVFAWTRLTAPEDVKVVIIGQDPYHGPGQAHGLAFSVRRGVPIPPSLANIFAAVRATYPTLPAPAHGCLEAWARRGVLLLNTTLTVRRGVPGSHAPLGWARLVRAVVQRLCETRPKLVFMLWGAHAQKACAPDPRRHKVLTFSHPSPLARTPFRTCPHFGEANAYLVQTGRAPVDWSVD.

Positions 35 to 80 (AAAAAPAGAGAGASKPARPPAAARPAKGTPAASAATTATGADASAP) are enriched in low complexity. The tract at residues 35–88 (AAAAAPAGAGAGASKPARPPAAARPAKGTPAASAATTATGADASAPAPDPGAPT) is disordered. Aspartate 158 acts as the Proton acceptor in catalysis.

It belongs to the uracil-DNA glycosylase (UDG) superfamily. UNG family.

It is found in the host nucleus. It catalyses the reaction Hydrolyzes single-stranded DNA or mismatched double-stranded DNA and polynucleotides, releasing free uracil.. In terms of biological role, excises uracil residues from the DNA which can arise as a result of misincorporation of dUMP residues by DNA polymerase or deamination of cytosines. Therefore may reduce deleterious uracil incorporation into the viral genome, particularly in terminally differentiated cells which lack DNA repair enzymes. This chain is Uracil-DNA glycosylase (UL2), found in Suid herpesvirus 1 (strain Indiana-Funkhauser / Becker) (SuHV-1).